The following is a 359-amino-acid chain: 3-dehydroquinate synthase (359 aa).

Residues 71-76, 105-109, 129-130, K142, and K151 contribute to the NAD(+) site; these read DGEAYK, GVIGD, and TT. E184, H247, and H264 together coordinate Zn(2+).

The protein belongs to the sugar phosphate cyclases superfamily. Dehydroquinate synthase family. It depends on Co(2+) as a cofactor. Requires Zn(2+) as cofactor. The cofactor is NAD(+).

Its subcellular location is the cytoplasm. The catalysed reaction is 7-phospho-2-dehydro-3-deoxy-D-arabino-heptonate = 3-dehydroquinate + phosphate. Its pathway is metabolic intermediate biosynthesis; chorismate biosynthesis; chorismate from D-erythrose 4-phosphate and phosphoenolpyruvate: step 2/7. In terms of biological role, catalyzes the conversion of 3-deoxy-D-arabino-heptulosonate 7-phosphate (DAHP) to dehydroquinate (DHQ). In Burkholderia multivorans (strain ATCC 17616 / 249), this protein is 3-dehydroquinate synthase.